We begin with the raw amino-acid sequence, 159 residues long: MRIGHGFDVHAFGGEGPIIIGGVRIPYEKGLLAHSDGDVALHALTDALLGAAALGDIGKLFPDTDPAFKGADSRELLREAWRRIQAKGYTLGNVDVTIIAQAPKMLPHIPQMRVFIAEDLGCHMDDVNVKATTTEKLGFTGRGEGIACEAVALLRKAEK.

Residues aspartate 8 and histidine 10 each contribute to the a divalent metal cation site. Residues 8–10 and 34–35 contribute to the 4-CDP-2-C-methyl-D-erythritol 2-phosphate site; these read DVH and HS. Histidine 42 serves as a coordination point for a divalent metal cation. Residues 56-58, 61-65, 100-106, 132-135, phenylalanine 139, and arginine 142 each bind 4-CDP-2-C-methyl-D-erythritol 2-phosphate; these read DIG, FPDTD, AQAPKML, and TTTE.

This sequence belongs to the IspF family. Homotrimer. It depends on a divalent metal cation as a cofactor.

The enzyme catalyses 4-CDP-2-C-methyl-D-erythritol 2-phosphate = 2-C-methyl-D-erythritol 2,4-cyclic diphosphate + CMP. The protein operates within isoprenoid biosynthesis; isopentenyl diphosphate biosynthesis via DXP pathway; isopentenyl diphosphate from 1-deoxy-D-xylulose 5-phosphate: step 4/6. In terms of biological role, involved in the biosynthesis of isopentenyl diphosphate (IPP) and dimethylallyl diphosphate (DMAPP), two major building blocks of isoprenoid compounds. Catalyzes the conversion of 4-diphosphocytidyl-2-C-methyl-D-erythritol 2-phosphate (CDP-ME2P) to 2-C-methyl-D-erythritol 2,4-cyclodiphosphate (ME-CPP) with a corresponding release of cytidine 5-monophosphate (CMP). The protein is 2-C-methyl-D-erythritol 2,4-cyclodiphosphate synthase of Klebsiella pneumoniae (strain 342).